The primary structure comprises 173 residues: MTYFMLFLGLCFVLGGLAVASNPSPYYGVVGLVLASVVGCGWLMSLGMSFVSLVLFMVYLGGMLVVFVYSVSLAADPFPEAWGDWRVVGYGVSFIVVLAAGAVVGGLVGCWDSGVITVDSVGMLSVRLDFSGVAMFYSCGVGMFLVAGWGLLLTLFVVLELVRGLSCGAIRAV.

The next 5 helical transmembrane spans lie at 1 to 21 (MTYFMLFLGLCFVLGGLAVAS), 27 to 47 (YGVVGLVLASVVGCGWLMSLG), 48 to 68 (MSFVSLVLFMVYLGGMLVVFV), 87 to 107 (VVGYGVSFIVVLAAGAVVGGL), and 139 to 159 (CGVGMFLVAGWGLLLTLFVVL).

The protein belongs to the complex I subunit 6 family.

The protein resides in the mitochondrion membrane. It carries out the reaction a ubiquinone + NADH + 5 H(+)(in) = a ubiquinol + NAD(+) + 4 H(+)(out). Its function is as follows. Core subunit of the mitochondrial membrane respiratory chain NADH dehydrogenase (Complex I) that is believed to belong to the minimal assembly required for catalysis. Complex I functions in the transfer of electrons from NADH to the respiratory chain. The immediate electron acceptor for the enzyme is believed to be ubiquinone. This is NADH-ubiquinone oxidoreductase chain 6 (MT-ND6) from Synthliboramphus antiquus (Ancient murrelet).